The chain runs to 312 residues: MAYSNQSRVTEFIISGLTNKPELQLPLFLLFLGIYLFTVLGNLGMIILILLSSHLHTPMYFFLSSLSFIDLCYSTIITPKMLVNFVTTKNVISYQECMTQLYFFIAFVISECHMLAAMAYDRYVAICNPLLYNVTMSYQVCSWMVGGVYGMGFIGAAIHTFCMLRVVFCKDNIINHYFCDLFPLMELACSSTYVNEVVLLSLSAFNIFIPTLTILGSYIFIIISILRIKSTEGRFKAFSTCSSHFSAVSVFFGSLAFMYLQPFSVSSKDKGKVSSVFYTTIVPMLNPMIYSLRNRDVKLALNKLFQKKKFHV.

The Extracellular segment spans residues 1 to 28 (MAYSNQSRVTEFIISGLTNKPELQLPLF). Asparagine 5 carries an N-linked (GlcNAc...) asparagine glycan. A helical membrane pass occupies residues 29 to 49 (LLFLGIYLFTVLGNLGMIILI). Over 50-56 (LLSSHLH) the chain is Cytoplasmic. A helical transmembrane segment spans residues 57–77 (TPMYFFLSSLSFIDLCYSTII). Residues 78–99 (TPKMLVNFVTTKNVISYQECMT) are Extracellular-facing. Cysteine 97 and cysteine 189 are oxidised to a cystine. The chain crosses the membrane as a helical span at residues 100–120 (QLYFFIAFVISECHMLAAMAY). Residues 121–143 (DRYVAICNPLLYNVTMSYQVCSW) lie on the Cytoplasmic side of the membrane. A helical transmembrane segment spans residues 144 to 164 (MVGGVYGMGFIGAAIHTFCML). Residues 165 to 204 (RVVFCKDNIINHYFCDLFPLMELACSSTYVNEVVLLSLSA) are Extracellular-facing. Residues 205-225 (FNIFIPTLTILGSYIFIIISI) form a helical membrane-spanning segment. Over 226-244 (LRIKSTEGRFKAFSTCSSH) the chain is Cytoplasmic. A helical membrane pass occupies residues 245-265 (FSAVSVFFGSLAFMYLQPFSV). At 266–274 (SSKDKGKVS) the chain is on the extracellular side. The chain crosses the membrane as a helical span at residues 275–292 (SVFYTTIVPMLNPMIYSL). At 293-312 (RNRDVKLALNKLFQKKKFHV) the chain is on the cytoplasmic side.

It belongs to the G-protein coupled receptor 1 family.

It localises to the cell membrane. Odorant receptor. In Mus musculus (Mouse), this protein is Olfactory receptor 8G50.